The primary structure comprises 374 residues: Alanine racemase (374 aa).

The active-site Proton acceptor; specific for D-alanine is the K34. An N6-(pyridoxal phosphate)lysine modification is found at K34. R138 contacts substrate. Y265 serves as the catalytic Proton acceptor; specific for L-alanine. M313 serves as a coordination point for substrate.

It belongs to the alanine racemase family. Pyridoxal 5'-phosphate is required as a cofactor.

The catalysed reaction is L-alanine = D-alanine. Its pathway is amino-acid biosynthesis; D-alanine biosynthesis; D-alanine from L-alanine: step 1/1. Functionally, catalyzes the interconversion of L-alanine and D-alanine. May also act on other amino acids. This Hahella chejuensis (strain KCTC 2396) protein is Alanine racemase (alr).